Reading from the N-terminus, the 112-residue chain is Large ribosomal subunit protein bL17 (112 aa).

It belongs to the bacterial ribosomal protein bL17 family. As to quaternary structure, part of the 50S ribosomal subunit. Contacts protein L32.

The chain is Large ribosomal subunit protein bL17 from Heliobacterium modesticaldum (strain ATCC 51547 / Ice1).